The primary structure comprises 210 residues: 23 kDa jasmonate-induced protein (210 aa).

It belongs to the jasmonate-induced protein family.

The polypeptide is 23 kDa jasmonate-induced protein (Hordeum vulgare (Barley)).